A 39-amino-acid polypeptide reads, in one-letter code: Natriuretic peptide PaNP-d (39 aa).

A propeptide spanning residues 1 to 8 is cleaved from the precursor; that stretch reads SGSKTAEI. The interval 1 to 39 is disordered; it reads SGSKTAEIDDGCFGLPLDPIGSTSGMGCRSVPKPIPGGS. Residues C12 and C28 are joined by a disulfide bond.

Belongs to the natriuretic peptide family. As to expression, expressed by the venom gland.

The protein localises to the secreted. Its function is as follows. Snake venom natriuretic peptide that targets both NPR1 and NPR2. Exhibits hypotensive and vasodepressor activities. This is Natriuretic peptide PaNP-d from Pseudechis australis (Mulga snake).